A 307-amino-acid polypeptide reads, in one-letter code: Aspartate carbamoyltransferase catalytic subunit (307 aa).

Carbamoyl phosphate is bound by residues Arg55 and Thr56. Lys85 contacts L-aspartate. Carbamoyl phosphate contacts are provided by Arg106, His135, and Gln138. L-aspartate-binding residues include Arg168 and Arg230. Carbamoyl phosphate is bound by residues Leu268 and Pro269.

The protein belongs to the aspartate/ornithine carbamoyltransferase superfamily. ATCase family. Heterododecamer (2C3:3R2) of six catalytic PyrB chains organized as two trimers (C3), and six regulatory PyrI chains organized as three dimers (R2).

It carries out the reaction carbamoyl phosphate + L-aspartate = N-carbamoyl-L-aspartate + phosphate + H(+). The protein operates within pyrimidine metabolism; UMP biosynthesis via de novo pathway; (S)-dihydroorotate from bicarbonate: step 2/3. Functionally, catalyzes the condensation of carbamoyl phosphate and aspartate to form carbamoyl aspartate and inorganic phosphate, the committed step in the de novo pyrimidine nucleotide biosynthesis pathway. This chain is Aspartate carbamoyltransferase catalytic subunit, found in Photorhabdus laumondii subsp. laumondii (strain DSM 15139 / CIP 105565 / TT01) (Photorhabdus luminescens subsp. laumondii).